Reading from the N-terminus, the 133-residue chain is Small ribosomal subunit protein uS8 (133 aa).

The protein belongs to the universal ribosomal protein uS8 family. Part of the 30S ribosomal subunit.

One of the primary rRNA binding proteins, it binds directly to 16S rRNA central domain where it helps coordinate assembly of the platform of the 30S subunit. The sequence is that of Small ribosomal subunit protein uS8 from Staphylothermus marinus (strain ATCC 43588 / DSM 3639 / JCM 9404 / F1).